The primary structure comprises 142 residues: Large ribosomal subunit protein uL13 (142 aa).

It belongs to the universal ribosomal protein uL13 family. As to quaternary structure, part of the 50S ribosomal subunit.

This protein is one of the early assembly proteins of the 50S ribosomal subunit, although it is not seen to bind rRNA by itself. It is important during the early stages of 50S assembly. This is Large ribosomal subunit protein uL13 from Marinomonas sp. (strain MWYL1).